The following is a 343-amino-acid chain: 4-hydroxy-2-oxovalerate aldolase 4 (343 aa).

A Pyruvate carboxyltransferase domain is found at Val-8–Thr-260. Arg-16–Asp-17 contacts substrate. A Mn(2+)-binding site is contributed by Asp-17. The active-site Proton acceptor is His-20. Residues Ser-170 and His-199 each contribute to the substrate site. The Mn(2+) site is built by His-199 and His-201. Residue Tyr-290 participates in substrate binding.

It belongs to the 4-hydroxy-2-oxovalerate aldolase family.

It carries out the reaction (S)-4-hydroxy-2-oxopentanoate = acetaldehyde + pyruvate. This chain is 4-hydroxy-2-oxovalerate aldolase 4, found in Dechloromonas aromatica (strain RCB).